The sequence spans 521 residues: Probable protein phosphatase 2C 16 (521 aa).

A PPM-type phosphatase domain is found at 21-327; it reads KYVVSSMQGW…ENTTVILVQF (307 aa). Residues D57, G58, Q276, and E318 each coordinate Mn(2+). Residues 354–431 form a disordered region; the sequence is AAPAGASDTS…ADADDGAPKP (78 aa).

The protein belongs to the PP2C family. The cofactor is Mg(2+). Requires Mn(2+) as cofactor.

It carries out the reaction O-phospho-L-seryl-[protein] + H2O = L-seryl-[protein] + phosphate. The catalysed reaction is O-phospho-L-threonyl-[protein] + H2O = L-threonyl-[protein] + phosphate. The sequence is that of Probable protein phosphatase 2C 16 from Oryza sativa subsp. japonica (Rice).